Reading from the N-terminus, the 159-residue chain is Transcriptional repressor NrdR (159 aa).

A zinc finger lies at 3–34 (CPFCRHDDTQVVDSRVSEDGAAIRRRRRCSAC). Residues 49 to 139 (PAVVKKDGSR…VYRRFEDVSE (91 aa)) enclose the ATP-cone domain.

Belongs to the NrdR family. The cofactor is Zn(2+).

Functionally, negatively regulates transcription of bacterial ribonucleotide reductase nrd genes and operons by binding to NrdR-boxes. The protein is Transcriptional repressor NrdR of Burkholderia cenocepacia (strain HI2424).